A 339-amino-acid chain; its full sequence is Phenylalanine--tRNA ligase alpha subunit (339 aa).

Glutamate 254 provides a ligand contact to Mg(2+).

Belongs to the class-II aminoacyl-tRNA synthetase family. Phe-tRNA synthetase alpha subunit type 1 subfamily. Tetramer of two alpha and two beta subunits. Requires Mg(2+) as cofactor.

Its subcellular location is the cytoplasm. The catalysed reaction is tRNA(Phe) + L-phenylalanine + ATP = L-phenylalanyl-tRNA(Phe) + AMP + diphosphate + H(+). The protein is Phenylalanine--tRNA ligase alpha subunit of Dictyoglomus thermophilum (strain ATCC 35947 / DSM 3960 / H-6-12).